Reading from the N-terminus, the 342-residue chain is uncharacterized protein (342 aa).

Residue 9–31 (LIFGGTTGIGLMTTIDFIIHNTS) coordinates NADP(+). Residue S208 coordinates substrate. The active-site Proton acceptor is Y222.

It belongs to the short-chain dehydrogenases/reductases (SDR) family.

This is an uncharacterized protein from Acanthamoeba polyphaga (Amoeba).